We begin with the raw amino-acid sequence, 78 residues long: Conotoxin ba1890.8 (78 aa).

The first 22 residues, 1 to 22 (MKTSGRLLFLCLAVGLLLESQA), serve as a signal peptide directing secretion. Residues 23-61 (HPIADAEDATRNVGSDGTSVELSEILERGQDSSAEKGQR) constitute a propeptide that is removed on maturation. The segment at 25–78 (IADAEDATRNVGSDGTSVELSEILERGQDSSAEKGQRQNDHDVDESGHDIPFPS) is disordered. Over residues 34-43 (NVGSDGTSVE) the composition is skewed to polar residues. Over residues 47-72 (ILERGQDSSAEKGQRQNDHDVDESGH) the composition is skewed to basic and acidic residues. Glutamine 62 bears the Pyrrolidone carboxylic acid mark.

It belongs to the conotoxin H superfamily. In terms of tissue distribution, expressed by the venom duct.

The protein resides in the secreted. Functionally, probable toxin. In Conus bayani (Bayan's cone), this protein is Conotoxin ba1890.8.